We begin with the raw amino-acid sequence, 485 residues long: Glycogen synthase (485 aa).

Position 20 (Lys-20) interacts with ADP-alpha-D-glucose.

This sequence belongs to the glycosyltransferase 1 family. Bacterial/plant glycogen synthase subfamily.

It carries out the reaction [(1-&gt;4)-alpha-D-glucosyl](n) + ADP-alpha-D-glucose = [(1-&gt;4)-alpha-D-glucosyl](n+1) + ADP + H(+). It functions in the pathway glycan biosynthesis; glycogen biosynthesis. Synthesizes alpha-1,4-glucan chains using ADP-glucose. This chain is Glycogen synthase, found in Vibrio vulnificus (strain YJ016).